The chain runs to 693 residues: MAKLREASFCALACVLVLFLSFVSADTYNRQDKQVYVVYMGSLPSQPDYKPTSDHISILQQVTGESSMEGRLVRSYKKSFNGFSARLTESERKRVAEMEGVVSVFPSKKYKLHTTASWDFMGLKEGKNTKRNLAVESDTIVGVFDTGISPESESFSGKGFGPPPKKWKGVCKGGKNFTCNNKLIGARDYTNEGTRDIEGHGTHTASTAAGNVVENTSFYGIGNGTARGGVPDSRIAAYKVCSGAGCSSEYILSAFDDAIADGVDVISASLGGDTAYMYEKDPIAIGAFHAMAKGILTVQSAGNNGPNPTVSVAPWILTVAASTTNRRIVTKVVLGNGKTLVGQSVNAFDLKGKQYPLVYETSVEKCNNESLTTLALSFLTLTPQSNEQIISMFHTLIMWSPKATILKSEAIFNQTDPKVAGFSSRGPNTIAVDILKPDITAPGVEILAAYSPLVSPSATTLDNRRVNYTITSGTSMACPHVSGVAAYIKTFHPEWYPSMIQSAIMTTAWPMNPSGTDAVSTEFAYGSGHIDPIAAINPGLVYELGKSDHIAFLCGLNYNATTLKLIAGEAVTCTGKTLPRNLNYPSMSAKLSKSKSSFTVTFNRTVTNVGTSNSTYKSKVVINHGSKLKVKVSPSVLSMKSVNEKQSFTVSVSGNDLNPKLPSSANLIWSDGTHNVRSPIVVYTDYASSVDIF.

The N-terminal stretch at 1–25 (MAKLREASFCALACVLVLFLSFVSA) is a signal peptide. The propeptide at 26-113 (DTYNRQDKQV…VFPSKKYKLH (88 aa)) is activation peptide. Residues 35–113 (VYVVYMGSLP…VFPSKKYKLH (79 aa)) enclose the Inhibitor I9 domain. Positions 117–536 (SWDFMGLKEG…SGHIDPIAAI (420 aa)) constitute a Peptidase S8 domain. Asp-145 (charge relay system) is an active-site residue. A glycan (N-linked (GlcNAc...) asparagine) is linked at Asn-176. His-200 acts as the Charge relay system in catalysis. 5 N-linked (GlcNAc...) asparagine glycosylation sites follow: Asn-215, Asn-223, Asn-368, Asn-413, and Asn-467. The region spanning 354–396 (QYPLVYETSVEKCNNESLTTLALSFLTLTPQSNEQIISMFHTL) is the PA domain. Ser-475 acts as the Charge relay system in catalysis. 3 N-linked (GlcNAc...) asparagine glycosylation sites follow: Asn-559, Asn-603, and Asn-613.

This sequence belongs to the peptidase S8 family. The C-terminal propeptide is autocleaved.

The protein localises to the secreted. This Arabidopsis thaliana (Mouse-ear cress) protein is Subtilisin-like protease SBT4.10.